A 604-amino-acid polypeptide reads, in one-letter code: Serine/threonine-protein kinase A-Raf (604 aa).

The region spanning 19–91 (GTVKVYLPNK…DGEELIVEVL (73 aa)) is the RBD domain. The segment at 98–144 (MHNFVRKTFFSLAFCDFCLKFLFHGFRCQTCGYKFHQHCSSKVPTVC) adopts a Phorbol-ester/DAG-type zinc-finger fold. His-99, Cys-112, Cys-115, Cys-125, Cys-128, His-133, Cys-136, and Cys-144 together coordinate Zn(2+). Phosphoserine is present on residues Ser-157 and Ser-162. Disordered regions lie at residues 178–222 (ELLT…HMVS) and 241–287 (TDAA…DEKK). Residue Thr-181 is modified to Phosphothreonine. Ser-186 is modified (phosphoserine). Residues 210 to 222 (IRSTSTPNVHMVS) are compositionally biased toward polar residues. The segment covering 252-265 (PRGSPSPASVSSGR) has biased composition (low complexity). Ser-255 and Ser-267 each carry phosphoserine. Over residues 272–287 (LPAEQRERKSLADEKK) the composition is skewed to basic and acidic residues. The region spanning 308 to 568 (VQLLKRIGTG…PQILATIELL (261 aa)) is the Protein kinase domain. ATP is bound by residues 314–322 (IGTGSFGTV) and Lys-334. The residue at position 316 (Thr-316) is a Phosphothreonine. Catalysis depends on Asp-427, which acts as the Proton acceptor.

This sequence belongs to the protein kinase superfamily. TKL Ser/Thr protein kinase family. RAF subfamily. In terms of assembly, interacts with TH1L/NELFD. It depends on Zn(2+) as a cofactor. Dephosphorylation by the SHOC2-MRAS-PP1c (SMP) complex consisting of SHOC2, GTP-bound M-Ras/MRAS and the catalytic subunit of protein phosphatase 1 (PPP1CA, PPP1CB or PPP1CC); this relieves inactivation and stimulates kinase activity.

It carries out the reaction L-seryl-[protein] + ATP = O-phospho-L-seryl-[protein] + ADP + H(+). It catalyses the reaction L-threonyl-[protein] + ATP = O-phospho-L-threonyl-[protein] + ADP + H(+). Functionally, involved in the transduction of mitogenic signals from the cell membrane to the nucleus. May also regulate the TOR signaling cascade. Phosphorylates PFKFB2. The protein is Serine/threonine-protein kinase A-Raf (Araf) of Rattus norvegicus (Rat).